The chain runs to 98 residues: NADH-ubiquinone oxidoreductase chain 4L (98 aa).

A run of 3 helical transmembrane segments spans residues 1–21 (MPLIYMNITLAFTMSLLGMLV), 29–49 (SLLCLEGMMLSLFIMITLMTL), and 58–78 (IMPITMLVFAACEAAVGLALL).

This sequence belongs to the complex I subunit 4L family. Core subunit of respiratory chain NADH dehydrogenase (Complex I) which is composed of 45 different subunits.

Its subcellular location is the mitochondrion inner membrane. The enzyme catalyses a ubiquinone + NADH + 5 H(+)(in) = a ubiquinol + NAD(+) + 4 H(+)(out). Its function is as follows. Core subunit of the mitochondrial membrane respiratory chain NADH dehydrogenase (Complex I) which catalyzes electron transfer from NADH through the respiratory chain, using ubiquinone as an electron acceptor. Part of the enzyme membrane arm which is embedded in the lipid bilayer and involved in proton translocation. This chain is NADH-ubiquinone oxidoreductase chain 4L (MT-ND4L), found in Pongo abelii (Sumatran orangutan).